A 210-amino-acid polypeptide reads, in one-letter code: MKFLDHEKRRQLLNERHSCKMFDSHYEFSSTELEEIAEIARLSPSSYNTQPWHFVMVTNKDLKKQIAAHSYFNEEMIKSASALMVVCSLKPSELLPTSHYMQNLYPESYKVRVIPSFAQMLGVRFNHSMQKLESYILEQCYIAVGQICMGVSLMGLDSCIIGGFDPLKVGEILEERINKPKIVCLIALGKRVAEASKKSRKSKVDAITWL.

Residue 150-155 (GVSLMG) participates in NADP(+) binding.

Belongs to the nitroreductase family.

Reduction of a variety of nitroaromatic compounds using NADPH as source of reducing equivalents; two electrons are transferred. The chain is Oxygen-insensitive NADPH nitroreductase (rdxA) from Helicobacter pylori (strain J99 / ATCC 700824) (Campylobacter pylori J99).